A 101-amino-acid chain; its full sequence is Small ribosomal subunit protein uS14 (101 aa).

Belongs to the universal ribosomal protein uS14 family. As to quaternary structure, part of the 30S ribosomal subunit. Contacts proteins S3 and S10.

Functionally, binds 16S rRNA, required for the assembly of 30S particles and may also be responsible for determining the conformation of the 16S rRNA at the A site. In Sodalis glossinidius (strain morsitans), this protein is Small ribosomal subunit protein uS14.